A 198-amino-acid polypeptide reads, in one-letter code: Snake venom metalloproteinase BpirMP (198 aa).

Residues 1-197 (TYIEVAVVAD…HNPQCILNEP (197 aa)) form the Peptidase M12B domain. E4 and D88 together coordinate Ca(2+). Cystine bridges form between C112-C192, C152-C176, and C154-C159. H137 serves as a coordination point for Zn(2+). E138 is a catalytic residue. Zn(2+) contacts are provided by H141 and H147. The Ca(2+) site is built by C192 and N195.

It belongs to the venom metalloproteinase (M12B) family. P-I subfamily. As to quaternary structure, monomer. Zn(2+) serves as cofactor. As to expression, expressed by the venom gland.

The protein localises to the secreted. Its activity is regulated as follows. Inhibited by the chelating agents EDTA, EGTA and 1,10-phenanthroline. Is not inhibited by serine proteinase inhibitors aprotinin, leupeptin and benzamidine. Zinc metalloprotease that preferentially degrades Aalpha chain of fibrinogen (FGA) (at a dose of 5 ug, whereas at a dose of 10 ug, both FGA and FGB are completely degraded). Degrades fibrin gel in a dose-dependent manner, as well blood clots formed in vitro (thrombolytic activity). Induces hemorrhage (in the dorsal skin of mice), with an MHD of 50 ug. The basal membrane components collagen (all chains of type IV) (COL4A4), fibronectin (FN1), laminin and nidogen are all degraded by this toxin. The chain is Snake venom metalloproteinase BpirMP from Bothrops pirajai (Piraja's lancehead).